The primary structure comprises 308 residues: Methionine synthase (308 aa).

Zn(2+)-binding residues include His192, Cys194, Glu215, and Cys282.

Belongs to the archaeal MetE family. The cofactor is Zn(2+).

Its pathway is amino-acid biosynthesis; L-methionine biosynthesis via de novo pathway. Catalyzes the transfer of a methyl group to L-homocysteine resulting in methionine formation. Can use methylcobalamin and methylcobinamide as methyl donors, but methylcobalamin is not considered to be the physiological substrate. This chain is Methionine synthase, found in Methanocaldococcus jannaschii (strain ATCC 43067 / DSM 2661 / JAL-1 / JCM 10045 / NBRC 100440) (Methanococcus jannaschii).